A 123-amino-acid polypeptide reads, in one-letter code: Small ribosomal subunit protein uS12 (123 aa).

Asp-89 bears the 3-methylthioaspartic acid mark. Residues 102–123 form a disordered region; the sequence is LDTQGVKDRKQGRSKYGAKRPK. The segment covering 113–123 has biased composition (basic residues); it reads GRSKYGAKRPK.

The protein belongs to the universal ribosomal protein uS12 family. In terms of assembly, part of the 30S ribosomal subunit. Contacts proteins S8 and S17. May interact with IF1 in the 30S initiation complex.

In terms of biological role, with S4 and S5 plays an important role in translational accuracy. Its function is as follows. Interacts with and stabilizes bases of the 16S rRNA that are involved in tRNA selection in the A site and with the mRNA backbone. Located at the interface of the 30S and 50S subunits, it traverses the body of the 30S subunit contacting proteins on the other side and probably holding the rRNA structure together. The combined cluster of proteins S8, S12 and S17 appears to hold together the shoulder and platform of the 30S subunit. In Magnetococcus marinus (strain ATCC BAA-1437 / JCM 17883 / MC-1), this protein is Small ribosomal subunit protein uS12.